Consider the following 325-residue polypeptide: Sel1-repeat-containing protein YbeQ (325 aa).

8 Sel1-like repeats span residues 26-61 (EAQY…EQGH), 63-97 (EAQY…LQGH), 103-130 (ALGW…AESG), 132-167 (SYAQ…LQGH), 168-203 (SDAQ…QQGN), 205-239 (HAQF…AQGS), 242-275 (AYVN…ECND), and 280-305 (YNLA…LYRK).

The protein to E.coli YbeT.

This chain is Sel1-repeat-containing protein YbeQ (ybeQ), found in Escherichia coli (strain K12).